The following is a 134-amino-acid chain: MATTFSASVSTLATSLATPTRISFQKPALVSRTNLSFNLRRSIPTRLSVSCAAKPETIEKVSKIVKKQLSLKDDQKVVAETKFADLGADSLDTVEIVMGLEEEFDIEMAEEKAQKIATVEEAAELIEELVLLKK.

The transit peptide at 1–51 (MATTFSASVSTLATSLATPTRISFQKPALVSRTNLSFNLRRSIPTRLSVSC) directs the protein to the chloroplast. In terms of domain architecture, Carrier spans 55–130 (PETIEKVSKI…EAAELIEELV (76 aa)). Ser90 carries the post-translational modification O-(pantetheine 4'-phosphoryl)serine.

It belongs to the acyl carrier protein (ACP) family. 4'-phosphopantetheine is transferred from CoA to a specific serine of apo-ACP by acpS. This modification is essential for activity because fatty acids are bound in thioester linkage to the sulfhydryl of the prosthetic group. As to expression, seed.

It localises to the plastid. It is found in the chloroplast. It functions in the pathway lipid metabolism; fatty acid biosynthesis. In terms of biological role, carrier of the growing fatty acid chain in fatty acid biosynthesis. This chain is Acyl carrier protein, chloroplastic (ACL1.A3), found in Brassica napus (Rape).